The primary structure comprises 264 residues: Thymidylate synthase (264 aa).

R21 lines the dUMP pocket. H51 provides a ligand contact to (6R)-5,10-methylene-5,6,7,8-tetrahydrofolate. Residue 126–127 (RR) participates in dUMP binding. The Nucleophile role is filled by C146. DUMP-binding positions include 166–169 (RSAD), N177, and 207–209 (HLY). A (6R)-5,10-methylene-5,6,7,8-tetrahydrofolate-binding site is contributed by D169. A263 contributes to the (6R)-5,10-methylene-5,6,7,8-tetrahydrofolate binding site.

It belongs to the thymidylate synthase family. Bacterial-type ThyA subfamily. Homodimer.

Its subcellular location is the cytoplasm. It catalyses the reaction dUMP + (6R)-5,10-methylene-5,6,7,8-tetrahydrofolate = 7,8-dihydrofolate + dTMP. Its pathway is pyrimidine metabolism; dTTP biosynthesis. Functionally, catalyzes the reductive methylation of 2'-deoxyuridine-5'-monophosphate (dUMP) to 2'-deoxythymidine-5'-monophosphate (dTMP) while utilizing 5,10-methylenetetrahydrofolate (mTHF) as the methyl donor and reductant in the reaction, yielding dihydrofolate (DHF) as a by-product. This enzymatic reaction provides an intracellular de novo source of dTMP, an essential precursor for DNA biosynthesis. This Legionella pneumophila subsp. pneumophila (strain Philadelphia 1 / ATCC 33152 / DSM 7513) protein is Thymidylate synthase.